We begin with the raw amino-acid sequence, 2325 residues long: MKKGSQQKIFSKAKIPSSSHSPIPSSMSNMRSRSLSPLIGSETLPFHSGGQWCEQVEIADENNMLLDYQDHKGADSHAGVRYITEALIKKLTKQDNLALIKSLNLSLSKDGGKKFKYIENLEKCVKLEVLNLSYNLIGKIEKLDKLLKLRELNLSYNKISKIEGIENMCNLQKLNLAGNEIEHIPVWLGKKLKSLRVLNLKGNKISSLQDISKLKPLQDLISLILVENPVVTLPHYLQFTIFHLRSLESLEGQPVTTQDRQEAFERFSLEEVERLERDLEKKMIETEELKSKQTRFLEEIKNQDKLNKSLKEEAMLQKQSCEELKSDLNTKNELLKQKTIELTRACQKQYELEQELAFYKIDAKFEPLNYYPSEYAEIDKAPDESPYIGKSRYKRNMFATESYIIDSAQAVQIKKMEPDEQLRNDHMNLRGHTPLDTQLEDKEKKISAAQTRLSELHDEIEKAEQQILRATEEFKQLEEAIQLKKISEAGKDLLYKQLSGRLQLVNKLRQEALDLELQMEKQKQEIAGKQKEIKDLQIAIDSLDSKDPKHSHMKAQKSGKEQQLDIMNKQYQQLESRLDEILSRIAKETEEIKDLEEQLTEGQIAANEALKKDLEGVISGLQEYLGTIKGQATQAQNECRKLRDEKETLLQRLTEVEQERDQLEIVAMDAENMRKELAELESALQEQHEVNASLQQTQGDLSAYEAELEARLNLRDAEANQLKEELEKVTRLTQLEQSALQAELEKERQALKNALGKAQFSEEKEQENSELHAKLKHLQDDNNLLKQQLKDFQNHLNHVVDGLVRPEEVAARVDELRRKLKLGTGEMNIHSPSDVLGKSLADLQKQFSEILARSKWERDEAQVRERKLQEEMALQQEKLATGQEEFRQACERALEARMNFDKRQHEARIQQMENEIHYLQENLKSMEEIQGLTDLQLQEADEEKERILAQLRELEKKKKLEDAKSQEQVFGLDKELKKLKKAVATSDKLATAELTIAKDQLKSLHGTVMKINQERAEELQEAERFSRKAAQAARDLTRAEAEIELLQNLLRQKGEQFRLEMEKTGVGTGANSQVLEIEKLNETMERQRTEIARLQNVLDLTGSDNKGGFENVLEEIAELRREVSYQNDYISSMADPFKRRGYWYFMPPPPSSKVSSHSSQATKDSGVGLKYSASTPVRKPRPGQQDGKEGSQPPPASGYWVYSPIRSGLHKLFPSRDADSGGDSQEESELDDQEEPPFVPPPGYMMYTVLPDGSPVPQGMALYAPPPPLPNNSRPLTPGTVVYGPPPAGAPMVYGPPPPNFSIPFIPMGVLHCNVPEHHNLENEVSRLEDIMQHLKSKKREERWMRASKRQSEKEMEELHHNIDDLLQEKKSLECEVEELHRTVQKRQQQKDFIDGNVESLMTELEIEKSLKHHEDIVDEIECIEKTLLKRRSELREADRLLAEAESELSCTKEKTKNAVEKFTDAKRSLLQTESDAEELERRAQETAVNLVKADQQLRSLQADAKDLEQHKIKQEEILKEINKIVAAKDSDFQCLSKKKEKLTEELQKLQKDIEMAERNEDHHLQVLKESEVLLQAKRAELEKLKSQVTSQQQEMAVLDRQLGHKKEELHLLQGSMVQAKADLQEALRLGETEVTEKCNHIREVKSLLEELSFQKGELNVQISERKTQLTLIKQEIEKEEENLQVVLRQMSKHKTELKNILDMLQLENHELQGLKLQHDQRVSELEKTQVAVLEEKLELENLQQISQQQKGEIEWQKQLLERDKREIERMTAESRALQSCVECLSKEKEDLQEKCDIWEKKLAQTKRVLAAAEENSKMEQSNLEKLELNVRKLQQELDQLNRDKLSLHNDISAMQQQLQEKREAVNSLQEELANVQDHLNLAKQDLLHTTKHQDVLLSEQTRLQKDISEWANRFEDCQKEEETKQQQLQVLQNEIEENKLKLVQQEMMFQRLQKERESEESKLETSKVTLKEQQHQLEKELTDQKSKLDQVLSKVLAAEERVRTLQEEERWCESLEKTLSQTKRQLSEREQQLVEKSGELLALQKEADSMRADFSLLRNQFLTERKKAEKQVASLKEALKIQRSQLEKNLLEQKQENSCIQKEMATIELVAQDNHERARRLMKELNQMQYEYTELKKQMANQKDLERRQMEISDAMRTLKSEVKDEIRTSLKNLNQFLPELPADLEAILERNENLEGELESLKENLPFTMNEGPFEEKLNFSQVHIMDEHWRGEALREKLRHREDRLKAQLRHCMSKQAEVLIKGKRQTEGTLHSLRRQVDALGELVTSTSADSASSPSLSQLESSLTEDSQLGQNQEKNASAR.

The tract at residues 1–33 is disordered; it reads MKKGSQQKIFSKAKIPSSSHSPIPSSMSNMRSR. Residues 16-33 are compositionally biased toward low complexity; it reads PSSSHSPIPSSMSNMRSR. LRR repeat units follow at residues 126–147, 148–169, 170–191, and 194–215; these read KLEVLNLSYNLIGKIEKLDKLL, KLRELNLSYNKISKIEGIENMC, NLQKLNLAGNEIEHIPVWLGKK, and SLRVLNLKGNKISSLQDISKLK. Positions 228–266 constitute an LRRCT domain; it reads NPVVTLPHYLQFTIFHLRSLESLEGQPVTTQDRQEAFER. 2 coiled-coil regions span residues 267-343 and 435-799; these read FSLE…IELT and LDTQ…LNHV. Ser-831 is modified (phosphoserine). Residues 851–1101 are a coiled coil; the sequence is LARSKWERDE…ARLQNVLDLT (251 aa). A disordered region spans residues 1150–1241; that stretch reads PSSKVSSHSS…DQEEPPFVPP (92 aa). The span at 1224 to 1235 shows a compositional bias: acidic residues; it reads SQEESELDDQEE. A coiled-coil region spans residues 1317-2255; it reads EHHNLENEVS…DRLKAQLRHC (939 aa). Ser-1475 is subject to Phosphoserine. Residues 1948–2118 form a required for centrosome localization region; the sequence is MMFQRLQKER…ELVAQDNHER (171 aa). A sufficient for interaction with HOOK2 region spans residues 1985 to 2325; sequence QKSKLDQVLS…QNQEKNASAR (341 aa). Positions 2288 to 2325 are disordered; it reads VTSTSADSASSPSLSQLESSLTEDSQLGQNQEKNASAR. Residues 2290–2314 show a composition bias toward low complexity; the sequence is STSADSASSPSLSQLESSLTEDSQL. A compositionally biased stretch (polar residues) spans 2315–2325; it reads GQNQEKNASAR.

Interacts with HOOK2. Interacts with EXOC6 and SNAPIN. Associates with the exocyst complex. As to expression, widely expressed with highest levels in testis and trachea.

Its subcellular location is the cytoplasm. It is found in the cytoskeleton. The protein localises to the microtubule organizing center. It localises to the centrosome. The protein resides in the midbody. Its subcellular location is the midbody ring. Its function is as follows. Involved in cell cycle progression and cytokinesis. During the late steps of cytokinesis, anchors exocyst and SNARE complexes at the midbody, thereby allowing secretory vesicle-mediated abscission. This Homo sapiens (Human) protein is Centriolin (CNTRL).